Reading from the N-terminus, the 305-residue chain is Glycine--tRNA ligase alpha subunit (305 aa).

The protein belongs to the class-II aminoacyl-tRNA synthetase family. As to quaternary structure, tetramer of two alpha and two beta subunits.

The protein resides in the cytoplasm. The enzyme catalyses tRNA(Gly) + glycine + ATP = glycyl-tRNA(Gly) + AMP + diphosphate. The protein is Glycine--tRNA ligase alpha subunit of Streptococcus pneumoniae (strain ATCC BAA-255 / R6).